A 424-amino-acid chain; its full sequence is Phosphomethylpyrimidine synthase (424 aa).

Residues Asn-66, Met-95, Tyr-124, His-163, 185 to 187 (SRG), 226 to 229 (DGMR), and Glu-265 contribute to the substrate site. A Zn(2+)-binding site is contributed by His-269. A substrate-binding site is contributed by Phe-292. His-333 lines the Zn(2+) pocket. [4Fe-4S] cluster is bound by residues Cys-408, Cys-411, and Cys-415.

Belongs to the ThiC family. Requires [4Fe-4S] cluster as cofactor.

It carries out the reaction 5-amino-1-(5-phospho-beta-D-ribosyl)imidazole + S-adenosyl-L-methionine = 4-amino-2-methyl-5-(phosphooxymethyl)pyrimidine + CO + 5'-deoxyadenosine + formate + L-methionine + 3 H(+). The protein operates within cofactor biosynthesis; thiamine diphosphate biosynthesis. In terms of biological role, catalyzes the synthesis of the hydroxymethylpyrimidine phosphate (HMP-P) moiety of thiamine from aminoimidazole ribotide (AIR) in a radical S-adenosyl-L-methionine (SAM)-dependent reaction. This is Phosphomethylpyrimidine synthase from Thermotoga neapolitana (strain ATCC 49049 / DSM 4359 / NBRC 107923 / NS-E).